The sequence spans 379 residues: MTAVTPTLPAPIGLLAELTHRCPLRCPYCSNPLELDKRSAELDTATWQRVLGEAAALGVLHVHLSGGEPTARQDIVEITGACADLGLYSNLITSGVGGALAKLDALSEAGLDHVQLSIQAAEAGNAERIGGLRNAQPQKFAFAERVVALGLPLTLNAVIHRGNIDEVPALIDLAVRLGAKRLEVAHTQYYGWAYVNRAALMPAKPDVDRSIRVVEEARERLKGRLVIDLVVPDYYAKYPKACAGGWGRRLMNVTPSGKVLPCHAAETIPGLAFWNVQERALGDIWANSPAFQAYRGTSWMKEPCRSCDRREKDWGGCRCQALALAGDAAATDPACSLSPLHAKVQALAVAESALETAPDYQYRTIGGAPVVPQPEGVSA.

One can recognise a Radical SAM core domain in the interval 8-220; sequence LPAPIGLLAE…IRVVEEARER (213 aa). [4Fe-4S] cluster contacts are provided by Cys-22, Cys-26, and Cys-29.

Belongs to the radical SAM superfamily. PqqE family. In terms of assembly, interacts with PqqD. The interaction is necessary for activity of PqqE. [4Fe-4S] cluster serves as cofactor.

The catalysed reaction is [PQQ precursor protein] + S-adenosyl-L-methionine = E-Y cross-linked-[PQQ precursor protein] + 5'-deoxyadenosine + L-methionine + H(+). It functions in the pathway cofactor biosynthesis; pyrroloquinoline quinone biosynthesis. Functionally, catalyzes the cross-linking of a glutamate residue and a tyrosine residue in the PqqA protein as part of the biosynthesis of pyrroloquinoline quinone (PQQ). This chain is PqqA peptide cyclase, found in Methylobacterium sp. (strain 4-46).